Consider the following 398-residue polypeptide: DNA replication and repair protein RecF (398 aa).

30–37 (GSNGLGKT) is an ATP binding site.

It belongs to the RecF family.

Its subcellular location is the cytoplasm. Its function is as follows. The RecF protein is involved in DNA metabolism; it is required for DNA replication and normal SOS inducibility. RecF binds preferentially to single-stranded, linear DNA. It also seems to bind ATP. In Renibacterium salmoninarum (strain ATCC 33209 / DSM 20767 / JCM 11484 / NBRC 15589 / NCIMB 2235), this protein is DNA replication and repair protein RecF.